Reading from the N-terminus, the 283-residue chain is Foldase protein PrsA 3 (283 aa).

Residues 1-21 (MKKKKIFIGTIISCVMLALSA) form the signal peptide. Cysteine 22 carries N-palmitoyl cysteine lipidation. A lipid anchor (S-diacylglycerol cysteine) is attached at cysteine 22. The PpiC domain maps to 132-222 (KPEMKVSHIL…YGYHIIKVTD (91 aa)).

Belongs to the PrsA family.

Its subcellular location is the cell membrane. It catalyses the reaction [protein]-peptidylproline (omega=180) = [protein]-peptidylproline (omega=0). Functionally, plays a major role in protein secretion by helping the post-translocational extracellular folding of several secreted proteins. The protein is Foldase protein PrsA 3 (prsA3) of Bacillus cereus (strain ATCC 14579 / DSM 31 / CCUG 7414 / JCM 2152 / NBRC 15305 / NCIMB 9373 / NCTC 2599 / NRRL B-3711).